Reading from the N-terminus, the 232-residue chain is A-type ATP synthase subunit D (232 aa).

This sequence belongs to the V-ATPase D subunit family. As to quaternary structure, has multiple subunits with at least A(3), B(3), C, D, E, F, H, I and proteolipid K(x).

It is found in the cell membrane. Its function is as follows. Component of the A-type ATP synthase that produces ATP from ADP in the presence of a proton gradient across the membrane. The sequence is that of A-type ATP synthase subunit D from Methanopyrus kandleri (strain AV19 / DSM 6324 / JCM 9639 / NBRC 100938).